The sequence spans 288 residues: Protein PGR (288 aa).

A run of 7 helical transmembrane segments spans residues 1-21, 29-49, 91-111, 123-143, 177-197, 210-230, and 268-288; these read METSPQFRLIFAVIISSLIAF, LDLSGGIAGFLVMTIHFTAGF, VLCNSGIASVLVVIACTLTGW, IVTALIGGIIGHYACCNGDTW, LLAALAAGTTVGLTFLIFGLF, LLVIPLSALAGLCGSLIDSIL, and VNFVSILLTSFLTSIASVYIF.

This sequence belongs to the TMEM19 family. As to expression, expressed in the vasculature of leaves, roots, inflorescences, siliques, anther filaments and sepals. Detected primarily in the phloem tissues, including in the root ans shoot apical meristems.

It localises to the cell membrane. In terms of biological role, involved in the glucose-triggered developmental leaf growth process. This is Protein PGR from Arabidopsis thaliana (Mouse-ear cress).